The sequence spans 284 residues: tRNA pseudouridine synthase B (284 aa).

The active-site Nucleophile is the Asp-40.

It belongs to the pseudouridine synthase TruB family. Type 1 subfamily.

It catalyses the reaction uridine(55) in tRNA = pseudouridine(55) in tRNA. Functionally, responsible for synthesis of pseudouridine from uracil-55 in the psi GC loop of transfer RNAs. This is tRNA pseudouridine synthase B from Helicobacter hepaticus (strain ATCC 51449 / 3B1).